Consider the following 497-residue polypeptide: Probable cytosol aminopeptidase (497 aa).

Mn(2+) is bound by residues K268 and D273. K280 is an active-site residue. Mn(2+) contacts are provided by D291, D350, and E352. R354 is a catalytic residue.

This sequence belongs to the peptidase M17 family. The cofactor is Mn(2+).

The protein localises to the cytoplasm. The catalysed reaction is Release of an N-terminal amino acid, Xaa-|-Yaa-, in which Xaa is preferably Leu, but may be other amino acids including Pro although not Arg or Lys, and Yaa may be Pro. Amino acid amides and methyl esters are also readily hydrolyzed, but rates on arylamides are exceedingly low.. It carries out the reaction Release of an N-terminal amino acid, preferentially leucine, but not glutamic or aspartic acids.. Its function is as follows. Presumably involved in the processing and regular turnover of intracellular proteins. Catalyzes the removal of unsubstituted N-terminal amino acids from various peptides. This Alkalilimnicola ehrlichii (strain ATCC BAA-1101 / DSM 17681 / MLHE-1) protein is Probable cytosol aminopeptidase.